The sequence spans 272 residues: Shikimate dehydrogenase (NADP(+)) (272 aa).

Shikimate is bound by residues 14–16 (SLS) and T61. K65 acts as the Proton acceptor in catalysis. D102 is a shikimate binding site. NADP(+) is bound by residues 127–131 (GAGGA), 151–156 (NRTPSK), and L215. Position 217 (Y217) interacts with shikimate. G239 lines the NADP(+) pocket.

Belongs to the shikimate dehydrogenase family. In terms of assembly, homodimer.

The enzyme catalyses shikimate + NADP(+) = 3-dehydroshikimate + NADPH + H(+). The protein operates within metabolic intermediate biosynthesis; chorismate biosynthesis; chorismate from D-erythrose 4-phosphate and phosphoenolpyruvate: step 4/7. Involved in the biosynthesis of the chorismate, which leads to the biosynthesis of aromatic amino acids. Catalyzes the reversible NADPH linked reduction of 3-dehydroshikimate (DHSA) to yield shikimate (SA). The chain is Shikimate dehydrogenase (NADP(+)) from Coxiella burnetii (strain CbuK_Q154) (Coxiella burnetii (strain Q154)).